We begin with the raw amino-acid sequence, 179 residues long: Large ribosomal subunit protein uL5 (179 aa).

The protein belongs to the universal ribosomal protein uL5 family. Part of the 50S ribosomal subunit; part of the 5S rRNA/L5/L18/L25 subcomplex. Contacts the 5S rRNA and the P site tRNA. Forms a bridge to the 30S subunit in the 70S ribosome.

In terms of biological role, this is one of the proteins that bind and probably mediate the attachment of the 5S RNA into the large ribosomal subunit, where it forms part of the central protuberance. In the 70S ribosome it contacts protein S13 of the 30S subunit (bridge B1b), connecting the 2 subunits; this bridge is implicated in subunit movement. Contacts the P site tRNA; the 5S rRNA and some of its associated proteins might help stabilize positioning of ribosome-bound tRNAs. This chain is Large ribosomal subunit protein uL5, found in Rickettsia felis (strain ATCC VR-1525 / URRWXCal2) (Rickettsia azadi).